The sequence spans 294 residues: Transcription termination/antitermination protein NusG (294 aa).

Residues 1–91 are disordered; that stretch reads MSDPNLNDAV…EEAEPAAPVD (91 aa). Over residues 25–39 the composition is skewed to acidic residues; sequence DIVEAADSVDPDQAE. A compositionally biased stretch (low complexity) spans 40–53; sequence AADLAAGEPAERAA. Over residues 59–85 the composition is skewed to acidic residues; the sequence is DDSDEDDAAAEEAVEADDESADEEEAE.

The protein belongs to the NusG family.

Functionally, participates in transcription elongation, termination and antitermination. The polypeptide is Transcription termination/antitermination protein NusG (Streptomyces griseus).